A 532-amino-acid polypeptide reads, in one-letter code: 2,3-bisphosphoglycerate-independent phosphoglycerate mutase (532 aa).

Mn(2+) contacts are provided by Asp-15 and Ser-65. Ser-65 acts as the Phosphoserine intermediate in catalysis. Residues His-126, 156-157 (RD), Arg-188, Arg-194, 258-261 (RPDR), and Lys-331 each bind substrate. 5 residues coordinate Mn(2+): Asp-398, His-402, Asp-439, His-440, and His-457.

This sequence belongs to the BPG-independent phosphoglycerate mutase family. In terms of assembly, monomer. It depends on Mn(2+) as a cofactor.

It catalyses the reaction (2R)-2-phosphoglycerate = (2R)-3-phosphoglycerate. It participates in carbohydrate degradation; glycolysis; pyruvate from D-glyceraldehyde 3-phosphate: step 3/5. Its function is as follows. Catalyzes the interconversion of 2-phosphoglycerate and 3-phosphoglycerate. The polypeptide is 2,3-bisphosphoglycerate-independent phosphoglycerate mutase (Microcystis aeruginosa (strain NIES-843 / IAM M-2473)).